The following is a 141-amino-acid chain: MTLEQTLAIIKPDAVERNLIGNIISRLEDKGFQIIAMKMLHLNQEQAEGFYTEHSDKAFFAELIRYMTSAPIVVLVLQKENAVKDYRTFMGTTNPEIAENGTLRYEFAINQTQNSVHGSDSLENAQREIAYFFAEAEIYAR.

ATP is bound by residues lysine 11, phenylalanine 59, arginine 87, threonine 93, arginine 104, and asparagine 114. Histidine 117 acts as the Pros-phosphohistidine intermediate in catalysis.

Belongs to the NDK family. As to quaternary structure, homotetramer. It depends on Mg(2+) as a cofactor.

The protein localises to the cytoplasm. It carries out the reaction a 2'-deoxyribonucleoside 5'-diphosphate + ATP = a 2'-deoxyribonucleoside 5'-triphosphate + ADP. It catalyses the reaction a ribonucleoside 5'-diphosphate + ATP = a ribonucleoside 5'-triphosphate + ADP. Its function is as follows. Major role in the synthesis of nucleoside triphosphates other than ATP. The ATP gamma phosphate is transferred to the NDP beta phosphate via a ping-pong mechanism, using a phosphorylated active-site intermediate. This chain is Nucleoside diphosphate kinase, found in Histophilus somni (strain 129Pt) (Haemophilus somnus).